The sequence spans 452 residues: Putative tripartite motif-containing protein 49B (452 aa).

The segment at 15–56 (CPICMNYFIDPVTIDCGHSFCRPCFYLNWKDSPFLVQCSECT) adopts an RING-type zinc-finger fold. Residues 88 to 129 (SEEQMCGTHRETKKMFCEVDRSLLCLLCSSSQEHRDHRHCPI) form a B box-type zinc finger. Residues Cys93, His96, Cys115, and His121 each coordinate Zn(2+). Residues 269 to 452 (ELSAGPITGL…LRPIFCCIHF (184 aa)) form the B30.2/SPRY domain.

The protein belongs to the TRIM/RBCC family.

The sequence is that of Putative tripartite motif-containing protein 49B (TRIM49B) from Homo sapiens (Human).